A 551-amino-acid polypeptide reads, in one-letter code: Eukaryotic translation initiation factor 3 subunit D-2 (551 aa).

The tract at residues 91-154 (TKPYQRGRYR…RNTQNMGRRF (64 aa)) is disordered. Positions 95–113 (QRGRYRPNMRNNVRSRGRT) are enriched in basic residues. Positions 121-136 (ASLGGSTAGGATASTT) are enriched in low complexity. The segment at 290–304 (QFDLLTVNETSVEPP) is RNA gate. The segment at 527–551 (PENAFDSDGDEEEESSDPLSNSNDN) is disordered. The span at 531–542 (FDSDGDEEEESS) shows a compositional bias: acidic residues.

This sequence belongs to the eIF-3 subunit D family. Component of the eukaryotic translation initiation factor 3 (eIF-3) complex. The eIF-3 complex interacts with pix.

Its subcellular location is the cytoplasm. MRNA cap-binding component of the eukaryotic translation initiation factor 3 (eIF-3) complex, which is involved in protein synthesis of a specialized repertoire of mRNAs and, together with other initiation factors, stimulates binding of mRNA and methionyl-tRNAi to the 40S ribosome. The eIF-3 complex specifically targets and initiates translation of a subset of mRNAs involved in cell proliferation. In the eIF-3 complex, eif3d specifically recognizes and binds the 7-methylguanosine cap of a subset of mRNAs. This chain is Eukaryotic translation initiation factor 3 subunit D-2, found in Drosophila melanogaster (Fruit fly).